A 59-amino-acid polypeptide reads, in one-letter code: Venom protein 37.1 (59 aa).

The first 18 residues, 1-18, serve as a signal peptide directing secretion; it reads MVSTLMIASVKLRLYCTA.

Belongs to the non-disulfide-bridged peptide (NDBP) superfamily. Long chain multifunctional peptide (group 2) family. In terms of tissue distribution, expressed by the venom gland.

Its subcellular location is the secreted. The sequence is that of Venom protein 37.1 from Lychas mucronatus (Chinese swimming scorpion).